The chain runs to 473 residues: H(+)/Cl(-) exchange transporter ClcA (473 aa).

Topologically, residues 1-32 (MKTDTSTFLAQQIVRLRRRDQIRRLMQRDKTP) are cytoplasmic. Residues 33 to 69 (LAILLMAAVVGTLTGLVGVAFEKAVSWVQNMRIGALV) form a helical membrane-spanning segment. Residues 70 to 76 (QVADHAF) are Periplasmic-facing. The helical transmembrane segment at 77-100 (LLWPLAFILSALLAMVGYFLVRKF) threads the bilayer. Positions 106–110 (GSGIP) match the Selectivity filter part_1 motif. S107 provides a ligand contact to chloride. Residues 109-116 (IPEIEGAL) constitute an intramembrane region (helical). Residues 117–123 (EELRPVR) lie on the Cytoplasmic side of the membrane. 2 helical membrane-spanning segments follow: residues 124 to 141 (WWRV…TLGA) and 148 to 166 (EGPT…LDVF). Positions 146–150 (GREGP) match the Selectivity filter part_2 motif. The Cytoplasmic portion of the chain corresponds to 167 to 176 (RMRSAEARHT). 2 consecutive intramembrane regions (helical) follow at residues 177 to 189 (LLAT…LSAA) and 193 to 201 (PLAGILFII). The Cytoplasmic portion of the chain corresponds to 202-214 (EEMRPQFRYNLIS). The helical transmembrane segment at 215–232 (IKAVFTGVIMSSIVFRIF) threads the bilayer. Residues 233 to 252 (NGEAPIIEVGKLSDAPVNTL) are Periplasmic-facing. The chain crosses the membrane as a helical span at residues 253–281 (WLYLILGIIFGCVGPVFNSLVLRTQDMFQ). At 282–287 (RFHGGE) the chain is on the cytoplasmic side. The helical transmembrane segment at 288–309 (IKKWVLMGGAIGGLCGILGLIE) threads the bilayer. Topologically, residues 310–329 (PEAAGGGFNLIPIAAAGNFS) are periplasmic. Transmembrane regions (helical) follow at residues 330–349 (VGLL…LCFS) and 355–376 (GIFA…MAAA). The short motif at 355 to 359 (GIFAP) is the Selectivity filter part_3 element. Chloride contacts are provided by I356 and F357. The Periplasmic segment spans residues 377–386 (VLFPQYHLEA). Positions 387-401 (GTFAIAGMGALMAAS) form an intramembrane region, helical. The segment at residues 402-404 (VRA) is an intramembrane region (note=Loop between two helices). Residues 405–416 (PLTGIVLVLEMT) constitute an intramembrane region (helical). Positions 417–421 (DNYQL) form an intramembrane region, note=Loop between two helices. The helical transmembrane segment at 422–438 (ILPMIITCLGATLLAQF) threads the bilayer. Residues 439-473 (LGGKPLYSTILARTLAKQDAEQAAKNQNAPAGENT) lie on the Cytoplasmic side of the membrane. Residue Y445 coordinates chloride.

This sequence belongs to the chloride channel (TC 2.A.49) family. ClcA subfamily. As to quaternary structure, homodimer.

Its subcellular location is the cell inner membrane. The catalysed reaction is 2 chloride(in) + H(+)(out) = 2 chloride(out) + H(+)(in). Proton-coupled chloride transporter. Functions as antiport system and exchanges two chloride ions for 1 proton. Probably acts as an electrical shunt for an outwardly-directed proton pump that is linked to amino acid decarboxylation, as part of the extreme acid resistance (XAR) response. This chain is H(+)/Cl(-) exchange transporter ClcA, found in Salmonella newport (strain SL254).